Consider the following 321-residue polypeptide: MVQQAVIQRSANQRATNQPTEYIGRFAPSPSGDLHFGSLIAALGSYLQARAQGGKWLVRIEDIDPPREVPGAASRILAALEHYGLHWDGPVIYQSQRHEAYRATLNWLEQQGLSYYCTCTRSRIHQLGGFYDGYCRDRHLPASGAAIRLRQTQPVYAFYDKLLGELHAHPALAQEDFIIRRRDGLFAYNLAVVVDDAFQGVTEIVRGADLIEPTVRQIALYQQLQHPVPGYIHLPLALNNQGNKLSKQNHAPPLPNGDPRPILIDALKFLRQPLPEYWQDLDLYLLLRYAVKHWTLVSIPLQGAITPQKTQRHSQSKYGEL.

L-glutamate contacts are provided by residues 25–29 (RFAPS) and glutamate 61. The 'HIGH' region signature appears at 28–38 (PSPSGDLHFGS). Zn(2+) is bound by residues cysteine 117, cysteine 119, tyrosine 131, and cysteine 135. Residues tyrosine 188 and arginine 206 each contribute to the L-glutamate site. A 'KMSKS' region motif is present at residues 244–248 (KLSKQ). Lysine 247 lines the ATP pocket.

Belongs to the class-I aminoacyl-tRNA synthetase family. GluQ subfamily. Requires Zn(2+) as cofactor.

In terms of biological role, catalyzes the tRNA-independent activation of glutamate in presence of ATP and the subsequent transfer of glutamate onto a tRNA(Asp). Glutamate is transferred on the 2-amino-5-(4,5-dihydroxy-2-cyclopenten-1-yl) moiety of the queuosine in the wobble position of the QUC anticodon. This Yersinia pestis protein is Glutamyl-Q tRNA(Asp) synthetase.